The following is a 250-amino-acid chain: 1-acyl-sn-glycerol-3-phosphate acyltransferase (250 aa).

An HXXXXD motif motif is present at residues His88 to Asp93.

This sequence belongs to the 1-acyl-sn-glycerol-3-phosphate acyltransferase family.

It carries out the reaction a 1-acyl-sn-glycero-3-phosphate + an acyl-CoA = a 1,2-diacyl-sn-glycero-3-phosphate + CoA. It participates in phospholipid metabolism; CDP-diacylglycerol biosynthesis; CDP-diacylglycerol from sn-glycerol 3-phosphate: step 2/3. Converts lysophosphatidic acid (LPA) into phosphatidic acid by incorporating acyl moiety at the 2 position. This is 1-acyl-sn-glycerol-3-phosphate acyltransferase (plsC) from Borreliella burgdorferi (strain ATCC 35210 / DSM 4680 / CIP 102532 / B31) (Borrelia burgdorferi).